We begin with the raw amino-acid sequence, 449 residues long: MKTKNRLLNSDIDFVNESIPYSRSDFNNMLTKLSSNDYYQLMVNTYIGTYGSAKFFGESTKTLPENFNWKTITEFDPPSIVSKKKLISEPENQYLCGNCWAMSTVQTIGDRFVVAGLVNWVPDLSTTFAMLYYPQGQCDGGNSAKLMRQIHTGIGLASKHCIDYSWCSRNIECKTDNSLGHFVSENKSYLLPSKKGCYYNSKHYIYKIDSRPKIISGYGTLNTDNEVLNNQILLKQEILANGPAVGGFLVFENFTSAFTKVNGGVYLENVSNYGSGKPVEFNPHINKYSGNHVVSILGWGVAKGIKISNTQFSDVPYWFCRNTWGKNWGDKGYFKIAMYPFNKKSQFLKLVSIVDHEGHTRRNSGVVICNVSETPILQSLPVIPSTEIPKSLDNSTNFYSQDENYEIKNNSQNEKGFPKGNRRRTTSSDTQIVFIFFLSVVILFIFIIL.

Catalysis depends on residues cysteine 99, histidine 292, and asparagine 322. Residues 429–449 (DTQIVFIFFLSVVILFIFIIL) form a helical membrane-spanning segment.

It belongs to the peptidase C1 family.

It localises to the membrane. Functionally, probable cysteine protease. The chain is Probable cysteine proteinase 224L from Acheta domesticus (House cricket).